We begin with the raw amino-acid sequence, 391 residues long: 8-amino-7-oxononanoate synthase 1 (391 aa).

108 to 109 (GF) provides a ligand contact to pyridoxal 5'-phosphate. H133 provides a ligand contact to substrate. Residues S180, 205–208 (DDAH), and 236–239 (TLSK) each bind pyridoxal 5'-phosphate. N6-(pyridoxal phosphate)lysine is present on K239. Substrate is bound at residue T353.

The protein belongs to the class-II pyridoxal-phosphate-dependent aminotransferase family. BioF subfamily. As to quaternary structure, homodimer. Pyridoxal 5'-phosphate serves as cofactor.

It catalyses the reaction 6-carboxyhexanoyl-[ACP] + L-alanine + H(+) = (8S)-8-amino-7-oxononanoate + holo-[ACP] + CO2. It functions in the pathway cofactor biosynthesis; biotin biosynthesis. In terms of biological role, catalyzes the decarboxylative condensation of pimeloyl-[acyl-carrier protein] and L-alanine to produce 8-amino-7-oxononanoate (AON), [acyl-carrier protein], and carbon dioxide. The protein is 8-amino-7-oxononanoate synthase 1 of Bacillus velezensis (strain DSM 23117 / BGSC 10A6 / LMG 26770 / FZB42) (Bacillus amyloliquefaciens subsp. plantarum).